The sequence spans 397 residues: Oxysterol-binding protein homolog C354.07c (397 aa).

2 N-linked (GlcNAc...) asparagine glycosylation sites follow: asparagine 186 and asparagine 195.

This sequence belongs to the OSBP family.

The protein resides in the endoplasmic reticulum. The polypeptide is Oxysterol-binding protein homolog C354.07c (Schizosaccharomyces pombe (strain 972 / ATCC 24843) (Fission yeast)).